Here is a 238-residue protein sequence, read N- to C-terminus: Ribonuclease PH (238 aa).

Residues Arg-86 and 124–126 (GTR) contribute to the phosphate site.

This sequence belongs to the RNase PH family. Homohexameric ring arranged as a trimer of dimers.

It carries out the reaction tRNA(n+1) + phosphate = tRNA(n) + a ribonucleoside 5'-diphosphate. In terms of biological role, phosphorolytic 3'-5' exoribonuclease that plays an important role in tRNA 3'-end maturation. Removes nucleotide residues following the 3'-CCA terminus of tRNAs; can also add nucleotides to the ends of RNA molecules by using nucleoside diphosphates as substrates, but this may not be physiologically important. Probably plays a role in initiation of 16S rRNA degradation (leading to ribosome degradation) during starvation. The sequence is that of Ribonuclease PH from Hahella chejuensis (strain KCTC 2396).